The chain runs to 489 residues: Cysteine--tRNA ligase (489 aa).

Cysteine 29 contributes to the Zn(2+) binding site. Residues valine 31 to histidine 41 carry the 'HIGH' region motif. Zn(2+)-binding residues include cysteine 215, histidine 240, and glutamate 244. The 'KMSKS' region signature appears at lysine 272–serine 276. Lysine 275 is an ATP binding site.

This sequence belongs to the class-I aminoacyl-tRNA synthetase family. Monomer. The cofactor is Zn(2+).

The protein resides in the cytoplasm. It carries out the reaction tRNA(Cys) + L-cysteine + ATP = L-cysteinyl-tRNA(Cys) + AMP + diphosphate. The sequence is that of Cysteine--tRNA ligase from Trichodesmium erythraeum (strain IMS101).